We begin with the raw amino-acid sequence, 400 residues long: WW domain-containing transcription regulator protein 1 (400 aa).

Lys-46 participates in a covalent cross-link: Glycyl lysine isopeptide (Lys-Gly) (interchain with G-Cter in ubiquitin). A disordered region spans residues 52 to 117 (FFKEPDSGSH…QQHAHLRQQS (66 aa)). Polar residues predominate over residues 61-70 (HSRQSSTDSS). Position 62 is a phosphoserine (Ser-62). Ser-89 carries the post-translational modification Phosphoserine; by LATS2. Ser-105 is modified (phosphoserine). Residues 124 to 157 (LPLPPGWEMTFTATGQRYFLNHIEKITTWQDPRK) form the WW domain. The interval 222–400 (PNALTTQQQQ…NKSEPFLTWL (179 aa)) is required for interaction with PALS1. A coiled-coil region spans residues 225–259 (LTTQQQQQQKLRLQRIQMERERIRMRQEELMRQEA). Ser-295 bears the Phosphoserine mark. Phosphoserine; by LATS2 is present on Ser-311. A PDZ-binding motif is present at residues 394–400 (EPFLTWL).

In terms of assembly, binds to SLC9A3R2 via the PDZ motif at the plasma membrane. Binds to YWHAZ in vivo and in vitro through the phosphoserine-binding motif RSHSSP. Interacts (via coiled-coil domain) with SMAD2 (via MH1 domain), SMAD3 and SMAD4. Interacts with MED15. Interacts with PAX8 and NKX2-1. Interacts with TEAD1, TEAD2, TEAD3 and TEAD4. Interacts (via WW domain) with PALS1. Interacts with LATS1. Interacts with YAP1 (when phosphorylated at 'Ser-127'). Interacts (via WW domain) with PRRG4 (via cytoplasmic domain). Interacts (via WW domain) with AMOTL2 (via PPXY motif); the interaction promotes WWTR1/TAZ localization to the cytoplasm and tight junctions, thereby inhibiting its transcriptional coactivator properties. Interacts (via WW domain) with AMOT isoform 1; the interaction facilitates translocation of WWTR1/TAZ to the cytoplasm. Phosphorylated by LATS2 and STK3/MST2. Phosphorylation by LATS2 results in creation of 14-3-3 binding sites, retention in the cytoplasm, and functional inactivation. Phosphorylation results in the inhibition of transcriptional coactivation through YWHAZ-mediated nuclear export. Phosphorylated in the nucleus by PRP4K; phosphorylation leads to nuclear exclusion. In terms of processing, ubiquitinated at Lys-46; leading to proteasomal degradation. Deubiquitinated and stabilized by UCHL1 at Lys-46; leading to inhibition of osteoclastogenesis. As to expression, highly expressed in kidney, heart, placenta and lung. Expressed in the thyroid tissue.

Its subcellular location is the nucleus. The protein resides in the cytoplasm. It localises to the cell membrane. It is found in the cell junction. The protein localises to the tight junction. Functionally, transcriptional coactivator which acts as a downstream regulatory target in the Hippo signaling pathway that plays a pivotal role in organ size control and tumor suppression by restricting proliferation and promoting apoptosis. The core of this pathway is composed of a kinase cascade wherein STK3/MST2 and STK4/MST1, in complex with its regulatory protein SAV1, phosphorylates and activates LATS1/2 in complex with its regulatory protein MOB1, which in turn phosphorylates and inactivates YAP1 oncoprotein and WWTR1/TAZ. WWTR1 enhances PAX8 and NKX2-1/TTF1-dependent gene activation. In conjunction with YAP1, involved in the regulation of TGFB1-dependent SMAD2 and SMAD3 nuclear accumulation. Plays a key role in coupling SMADs to the transcriptional machinery such as the mediator complex. Regulates embryonic stem-cell self-renewal, promotes cell proliferation and epithelial-mesenchymal transition. The sequence is that of WW domain-containing transcription regulator protein 1 from Homo sapiens (Human).